Here is a 20-residue protein sequence, read N- to C-terminus: L-amino-acid oxidase L2 (20 aa).

It belongs to the flavin monoamine oxidase family. FIG1 subfamily. In terms of assembly, monomer. This is in contrast with most of its orthologs, that are non-covalently linked homodimers. FAD serves as cofactor. In terms of processing, N-glycosylated. As to expression, expressed by the venom gland.

The protein resides in the secreted. It carries out the reaction an L-alpha-amino acid + O2 + H2O = a 2-oxocarboxylate + H2O2 + NH4(+). The enzyme catalyses L-leucine + O2 + H2O = 4-methyl-2-oxopentanoate + H2O2 + NH4(+). It catalyses the reaction L-phenylalanine + O2 + H2O = 3-phenylpyruvate + H2O2 + NH4(+). The catalysed reaction is L-tryptophan + O2 + H2O = indole-3-pyruvate + H2O2 + NH4(+). It carries out the reaction L-methionine + O2 + H2O = 4-methylsulfanyl-2-oxobutanoate + H2O2 + NH4(+). The enzyme catalyses L-isoleucine + O2 + H2O = (S)-3-methyl-2-oxopentanoate + H2O2 + NH4(+). It catalyses the reaction L-tyrosine + O2 + H2O = 3-(4-hydroxyphenyl)pyruvate + H2O2 + NH4(+). In terms of biological role, catalyzes an oxidative deamination of predominantly hydrophobic and aromatic L-amino acids, thus producing hydrogen peroxide that may contribute to the diverse toxic effects of this enzyme. Is active on L-Ile, L-Leu, L-Met, L-Phe, L-Trp, and L-Tyr. Exhibits diverse biological activities, such as hemorrhage, hemolysis, edema, apoptosis of vascular endothelial cells or tumor cell lines, antibacterial and antiparasitic activities, as well as regulation of platelet aggregation. Its effect on platelets is controversial, since it either induces aggregation or inhibits agonist-induced aggregation. These different effects are probably due to different experimental conditions. The chain is L-amino-acid oxidase L2 from Daboia russelii (Russel's viper).